We begin with the raw amino-acid sequence, 1307 residues long: MSATKKTYSSTTSAKSKHSVRVAQTTADAALEAVYEMSGDSGDSFDYSKSVGQSAESVPAGAVTAYLQRMQREGLIQNFGCMVAVEEPNFCVIAYSENASEFLDLIPQAVPSMGEMDVLGIGTDIRTLFTPSSSAALEKAAATQDISLLNPITVHCRRSGKPLYAIAHRIDIGIVIDFEAVKMIDVPVSAAAGALQSHKLAARAITRLQALPGGDIELLCDTIVEEVRELTGYDRVMAFKFHEDEHGEVVAEIRRMDLEPYMGLHYPATDIPQASRFLLMKNRVRLIADCYASPVKLIQDPDIRQPVSLAGSTLRAPHGCHAQYMGNMGSIASLVMAVIINDNEEYSRGAIQRGRKLWGLVVCQHTSPRTVPFPLRSVCEFLMQVFGMQLNLHVELAAQLREKHILRTQTLLCDMLLRDAPIGIVSQTPNIMDLVKCDGAALYYGKRVWLLGTTPTENQIKEIADWLLEHHNDSTGLSTDSLADANYPGAHLLGDAVCGMAAAKITAKDFLFWFRSHTATEVKWGGAKHDPDEKDDGRKMHPRSSFKAFLEVVNKRSPPWEDVEMDAIHSLQLILRGSFRDIADSDTKTMIHARLNDLKLQGVEERNALANEMSRVLETAAAPILAVDSRGMINAWNAKIAQVTGLPVEEAMHCSLTKDLVLDESVVVVERLLSLALQGEEEQNVEIKLKTFGTQTTERAVILIVNACCSRDASDFVVGVFFVGQDVTEQRMFMDRFTRIQGGEKTTVQDPHPLMRPSFDGDEFGRTFKRNSALGGLKDHATGSVERLDLYLRRAEECMEVMETIPSPKFNNKQCQYLAGKLKAVLQSASLFLRISHHEHHELGASIDMGRHVEIFKLLLALAKEIESFIQGCCKDEWIKAAMTLTNVSEYVSSMGFNLELCKIAFCKSCAASGSLTLDQIEVICKDEAEVVKRNASIDVDTLFAKVIYDLTEKTLSSDQNDLAIYLLQRLKRAKPILPSFSSRPSWWNFYDDWSFSEKFFQWIQITGSLGSGSSATVEKAVWLGTPVAKKTFYGRNNEDFKREVEILAELCHPNITSMFCSPLYRRKCSIIMELMDGDLLALMQRRLDRNEDHDSPPFSILEVVDIILQTSEGMNYLHEKGIIHRDLKSMNILVKSVKVTKSEIGYVHVKVADFGLSKTKDSSTRYSNQTWNRGTNRWMAPEVINLGYESTEGEISFDGKVPKYPLKSDVYSFGMVCYEVLTGDVPFPEEKNPNNVKRMVLEGVRPDLPAHCPIELKALITDCWNQDPLKRPSFAVICQKLKYLKYLLMTGFSSYQDSYPSTEEPS.

Positions 215–394 constitute a GAF domain; that stretch reads DIELLCDTIV…VFGMQLNLHV (180 aa). Cys-320 serves as a coordination point for phytochromobilin. Positions 609–680 constitute a PAS domain; sequence LANEMSRVLE…RLLSLALQGE (72 aa). A PAC domain is found at 683-739; that stretch reads QNVEIKLKTFGTQTTERAVILIVNACCSRDASDFVVGVFFVGQDVTEQRMFMDRFTR. The hinge stretch occupies residues 779–1003; it reads DHATGSVERL…WSFSEKFFQW (225 aa). The Protein kinase domain maps to 1004–1307; it reads IQITGSLGSG…DSYPSTEEPS (304 aa). Residues 1010 to 1018 and Lys-1031 each bind ATP; that span reads LGSGSSATV. The active site involves Asp-1127.

This sequence in the N-terminal section; belongs to the phytochrome family. The protein in the C-terminal section; belongs to the protein kinase superfamily. Ser/Thr protein kinase family. Homodimer. Contains one covalently linked phytochromobilin chromophore.

It localises to the cell membrane. It carries out the reaction L-seryl-[protein] + ATP = O-phospho-L-seryl-[protein] + ADP + H(+). It catalyses the reaction L-threonyl-[protein] + ATP = O-phospho-L-threonyl-[protein] + ADP + H(+). Regulatory photoreceptor which exists in two forms that are reversibly interconvertible by light: the Pr form that absorbs maximally in the red region of the spectrum and the Pfr form that absorbs maximally in the far-red region. Photoconversion of Pr to Pfr induces an array of morphogenic responses, whereas reconversion of Pfr to Pr cancels the induction of those responses. Pfr controls the expression of a number of nuclear genes including those encoding the small subunit of ribulose-bisphosphate carboxylase, chlorophyll A/B binding protein, protochlorophyllide reductase, rRNA, etc. It also controls the expression of its own gene(s) in a negative feedback fashion. This Ceratodon purpureus (Fire moss) protein is Light-sensor Protein kinase (PHY1).